The following is a 557-amino-acid chain: NADH-quinone oxidoreductase subunit C/D (557 aa).

Residues 1–13 are compositionally biased toward acidic residues; the sequence is MSLEEQQSDDPAE. Residues 1–20 are disordered; sequence MSLEEQQSDDPAELESGVSR. Residues 1-174 form an NADH dehydrogenase I subunit C region; that stretch reads MSLEEQQSDD…ATLREHANPL (174 aa). Positions 184 to 557 are NADH dehydrogenase I subunit D; it reads NTMYINIGPH…LDIVLGEVDR (374 aa). K517 is covalently cross-linked (Glycyl lysine isopeptide (Lys-Gly) (interchain with G-Cter in SAMP2)).

This sequence in the N-terminal section; belongs to the complex I 30 kDa subunit family. It in the C-terminal section; belongs to the complex I 49 kDa subunit family. As to quaternary structure, NDH-1 is composed of 13 different subunits. Subunits NuoB, CD, E, F, and G constitute the peripheral sector of the complex.

Its subcellular location is the cell membrane. It carries out the reaction a quinone + NADH + 5 H(+)(in) = a quinol + NAD(+) + 4 H(+)(out). Its function is as follows. NDH-1 shuttles electrons from NADH, via FMN and iron-sulfur (Fe-S) centers, to quinones in the respiratory chain. Couples the redox reaction to proton translocation (for every two electrons transferred, four hydrogen ions are translocated across the cytoplasmic membrane), and thus conserves the redox energy in a proton gradient. The polypeptide is NADH-quinone oxidoreductase subunit C/D (nuoCD) (Haloferax volcanii (strain ATCC 29605 / DSM 3757 / JCM 8879 / NBRC 14742 / NCIMB 2012 / VKM B-1768 / DS2) (Halobacterium volcanii)).